The sequence spans 553 residues: Mucolipin-3 (553 aa).

Over 1-62 the chain is Cytoplasmic; that stretch reads MANPEVLVSS…FWARGRKPWK (62 aa). The segment at 52–62 is interaction with phosphoinositides; it reads KFWARGRKPWK. Residues 63-83 traverse the membrane as a helical segment; sequence LAIQILKIAMVTIQLVLFGLS. At 84–283 the chain is on the extracellular side; that stretch reads NQMVVAFKEE…VSGSIQKNTH (200 aa). The segment at 104-118 is extracellular/lumenal pore loop; that stretch reads KGYMDRMDDTYAVYT. An N-linked (GlcNAc...) asparagine glycan is attached at Asn138. A disulfide bond links Cys159 and Cys185. N-linked (GlcNAc...) asparagine glycosylation occurs at Asn205. An intrachain disulfide couples Cys238 to Cys269. The helical transmembrane segment at 284–304 threads the bilayer; sequence YMMIFDAFVILTCLASLVLCA. The Cytoplasmic segment spans residues 305–341; the sequence is RSVIRGLQLQQEFVNFFLLHYKKEVSASDQMEFINGW. The chain crosses the membrane as a helical span at residues 342–362; sequence YIMIIISDILTIVGSVLKMEI. Topologically, residues 363–371 are extracellular; sequence QAKSLTSYD. The chain crosses the membrane as a helical span at residues 372–392; it reads VCSILLGTSTMLVWLGVIRYL. Topologically, residues 393–414 are cytoplasmic; that stretch reads GFFAKYNLLILTLQAALPNVMR. The chain crosses the membrane as a helical span at residues 415–435; that stretch reads FCCCAAMIYLGYCFCGWIVLG. The Extracellular segment spans residues 436-443; that stretch reads PYHEKFRS. Positions 444-464 form an intramembrane region, pore-forming; it reads LNRVSECLFSLINGDDMFSTF. The Selectivity filter signature appears at 456 to 459; that stretch reads NGDD. Residues 465–475 are Extracellular-facing; the sequence is AKMQQKSYLVW. A helical transmembrane segment spans residues 476-497; it reads LFSRVYLYSFISLFIYMILSLF. The Cytoplasmic portion of the chain corresponds to 498-553; the sequence is IALITDTYETIKHYQQDGFPETELRKFIAECKDLPNSGKYRLEDDPPGSLLCCCKK.

It belongs to the transient receptor (TC 1.A.4) family. Polycystin subfamily. MCOLN3 sub-subfamily. In terms of assembly, homotetramer. Can heterooligomerize with MCOLN1; heteromeric assemblies have different channel properties as compared to the respective homooligomers and may be tissue-specific. May heterooligomerize with TRPV5 to form a functional distinct ion channel. Interacts with GABARAPL2. In terms of processing, N-glycosylated. Expressed in the cochlea; particularly in the inner and outer hair cells (at protein level).

It localises to the early endosome membrane. The protein resides in the late endosome membrane. Its subcellular location is the cytoplasmic vesicle. It is found in the autophagosome membrane. The protein localises to the cell projection. It localises to the stereocilium membrane. The enzyme catalyses Ca(2+)(in) = Ca(2+)(out). It catalyses the reaction Mg(2+)(in) = Mg(2+)(out). The catalysed reaction is K(+)(in) = K(+)(out). It carries out the reaction Na(+)(in) = Na(+)(out). Its activity is regulated as follows. Channel activity is activated by PtdIns(3,5)P2 (phosphatidylinositol 3,5-bisphosphate). Inhibited by lumenal H(+) and Na(+). The channel pore shows dynamic behavior and undergoes spontaneous, Ca(2+)-dependent modulation when conducting Ca(2+). In terms of biological role, nonselective cation channel probably playing a role in the regulation of membrane trafficking events. Acts as a Ca(2+)-permeable cation channel with inwardly rectifying activity. Mediates release of Ca(2+) from endosomes to the cytoplasm, contributes to endosomal acidification and is involved in the regulation of membrane trafficking and fusion in the endosomal pathway. Also permeable to Mg(2+), Na(+) and K(+). Does not seem to act as mechanosensory transduction channel in inner ear sensory hair cells. Proposed to play a critical role at the cochlear stereocilia ankle-link region during hair-bundle growth. Involved in the regulation of autophagy. Through association with GABARAPL2 may be involved in autophagosome formation possibly providing Ca(2+) for the fusion process. Through a possible and probably tissue-specific heteromerization with MCOLN1 may be at least in part involved in many lysosome-dependent cellular events. Possible heteromeric ion channel assemblies with TRPV5 show pharmacological similarity with TRPML3. The polypeptide is Mucolipin-3 (Mcoln3) (Mus musculus (Mouse)).